The primary structure comprises 155 residues: MSRRGTAEEKTAKSDPIYRNRLVNMLVNRILKHGKKSLAYQILYRAVKKIQQKTETNPLSVLRQAIRGVTPDIVVKARRVGGSTHQVPIEIGSTQGKALAIRWLLVASRKRPGRNMAFKLSSELVDAAKGGGDAIRKKEETHKMAEANRAFAHFR.

It belongs to the universal ribosomal protein uS7 family. As to quaternary structure, part of the 30S ribosomal subunit.

The protein resides in the plastid. The protein localises to the chloroplast. In terms of biological role, one of the primary rRNA binding proteins, it binds directly to 16S rRNA where it nucleates assembly of the head domain of the 30S subunit. In Lactoris fernandeziana, this protein is Small ribosomal subunit protein uS7c (rps7).